Here is a 189-residue protein sequence, read N- to C-terminus: UPF0301 protein HRM2_24640 (189 aa).

This sequence belongs to the UPF0301 (AlgH) family.

The chain is UPF0301 protein HRM2_24640 from Desulforapulum autotrophicum (strain ATCC 43914 / DSM 3382 / VKM B-1955 / HRM2) (Desulfobacterium autotrophicum).